Reading from the N-terminus, the 568-residue chain is Zinc finger protein 76 (568 aa).

Residue K24 forms a Glycyl lysine isopeptide (Lys-Gly) (interchain with G-Cter in SUMO2) linkage. 3 repeat units span residues 34–45 (IQLEDGTTAYIH), 62–73 (VQLEDGSMAYIH), and 88–99 (VQLEDGSTAYIH). The segment at 34 to 99 (IQLEDGTTAY…LEDGSTAYIH (66 aa)) is 3 X 12 AA approximate repeats. 7 C2H2-type zinc fingers span residues 165–189 (FRCGYKGCGRLYTTAHHLKVHERAH), 195–219 (YRCDFPSCGKAFATGYGLKSHVRTH), 225–249 (YKCPEELCSKAFKTSGDLQKHVRTH), 255–279 (FRCPFEGCGRSFTTSNIRKVHVRTH), 285–309 (YTCPEPHCGRGFTSATNYKNHVRIH), 315–339 (YVCTVPGCGKRFTEYSSLYKHHVVH), and 345–368 (YTCSSCGKTYRQTSTLAMHKRSAH). Positions 365–401 (RSAHGELEATEESEQALYEQQQLEAASAAEESPSPKP) are disordered. Over residues 379–396 (QALYEQQQLEAASAAEES) the composition is skewed to low complexity.

It belongs to the krueppel C2H2-type zinc-finger protein family.

The protein localises to the nucleus. May be involved in transcriptional regulation. In Rattus norvegicus (Rat), this protein is Zinc finger protein 76 (Znf76).